Reading from the N-terminus, the 472-residue chain is Aspartyl/glutamyl-tRNA(Asn/Gln) amidotransferase subunit B (472 aa).

The protein belongs to the GatB/GatE family. GatB subfamily. As to quaternary structure, heterotrimer of A, B and C subunits.

It catalyses the reaction L-glutamyl-tRNA(Gln) + L-glutamine + ATP + H2O = L-glutaminyl-tRNA(Gln) + L-glutamate + ADP + phosphate + H(+). It carries out the reaction L-aspartyl-tRNA(Asn) + L-glutamine + ATP + H2O = L-asparaginyl-tRNA(Asn) + L-glutamate + ADP + phosphate + 2 H(+). Functionally, allows the formation of correctly charged Asn-tRNA(Asn) or Gln-tRNA(Gln) through the transamidation of misacylated Asp-tRNA(Asn) or Glu-tRNA(Gln) in organisms which lack either or both of asparaginyl-tRNA or glutaminyl-tRNA synthetases. The reaction takes place in the presence of glutamine and ATP through an activated phospho-Asp-tRNA(Asn) or phospho-Glu-tRNA(Gln). The chain is Aspartyl/glutamyl-tRNA(Asn/Gln) amidotransferase subunit B from Campylobacter jejuni subsp. doylei (strain ATCC BAA-1458 / RM4099 / 269.97).